Reading from the N-terminus, the 104-residue chain is Small ribosomal subunit protein bS18c (104 aa).

The disordered stretch occupies residues 84–104 (DKQFERSESTPRTIGLRTRNK).

Belongs to the bacterial ribosomal protein bS18 family. In terms of assembly, part of the 30S ribosomal subunit.

The protein resides in the plastid. It localises to the chloroplast. The chain is Small ribosomal subunit protein bS18c from Cucumis sativus (Cucumber).